A 231-amino-acid polypeptide reads, in one-letter code: Cytidylate kinase (231 aa).

17–25 provides a ligand contact to ATP; the sequence is GPTASGKGT.

It belongs to the cytidylate kinase family. Type 1 subfamily.

The protein localises to the cytoplasm. The enzyme catalyses CMP + ATP = CDP + ADP. It catalyses the reaction dCMP + ATP = dCDP + ADP. The polypeptide is Cytidylate kinase (Ralstonia pickettii (strain 12J)).